Here is a 157-residue protein sequence, read N- to C-terminus: S-ribosylhomocysteine lyase (157 aa).

Fe cation is bound by residues His54, His58, and Cys126.

The protein belongs to the LuxS family. Homodimer. The cofactor is Fe cation.

It catalyses the reaction S-(5-deoxy-D-ribos-5-yl)-L-homocysteine = (S)-4,5-dihydroxypentane-2,3-dione + L-homocysteine. Its function is as follows. Involved in the synthesis of autoinducer 2 (AI-2) which is secreted by bacteria and is used to communicate both the cell density and the metabolic potential of the environment. The regulation of gene expression in response to changes in cell density is called quorum sensing. Catalyzes the transformation of S-ribosylhomocysteine (RHC) to homocysteine (HC) and 4,5-dihydroxy-2,3-pentadione (DPD). The protein is S-ribosylhomocysteine lyase of Bacillus velezensis (strain DSM 23117 / BGSC 10A6 / LMG 26770 / FZB42) (Bacillus amyloliquefaciens subsp. plantarum).